Here is a 72-residue protein sequence, read N- to C-terminus: Protein SlyX (72 aa).

Residues 53–72 (KSSQSSMLARPEDETPPPHY) are disordered.

This sequence belongs to the SlyX family.

The protein is Protein SlyX of Proteus mirabilis (strain HI4320).